Consider the following 687-residue polypeptide: UvrABC system protein C (687 aa).

The 80-residue stretch at 16-95 folds into the GIY-YIG domain; the sequence is TEPGVYKFRD…IKKFDPHFNV (80 aa). Residues 208 to 243 enclose the UVR domain; it reads DSVVRRLTNEMISASEALDFEKAARKRDDLNAVRKI.

The protein belongs to the UvrC family. As to quaternary structure, interacts with UvrB in an incision complex.

The protein localises to the cytoplasm. The UvrABC repair system catalyzes the recognition and processing of DNA lesions. UvrC both incises the 5' and 3' sides of the lesion. The N-terminal half is responsible for the 3' incision and the C-terminal half is responsible for the 5' incision. This is UvrABC system protein C from Corynebacterium diphtheriae (strain ATCC 700971 / NCTC 13129 / Biotype gravis).